The chain runs to 28 residues: U1-poneritoxin-Da4a (28 aa).

The residue at position 28 (alanine 28) is an Alanine amide.

Expressed by the venom gland.

The protein localises to the secreted. Shows a broad spectrum of activity against both Gram-positive and Gram-negative bacteria. Also has antimicrobial activity against S.cerevisiae. Has insecticidal and non-hemolytic activity. In Dinoponera australis (Giant neotropical hunting ant), this protein is U1-poneritoxin-Da4a.